The chain runs to 334 residues: D-fructose 1,6-bisphosphatase class 2/sedoheptulose 1,7-bisphosphatase (334 aa).

Mn(2+) contacts are provided by Asp33, Glu57, Asp85, and Glu88. Residues 88-90 (EGT), Tyr119, 164-166 (RAR), and 186-188 (DGD) each bind substrate. Position 213 (Glu213) interacts with Mn(2+).

It belongs to the FBPase class 2 family. Homotetramer. Mn(2+) serves as cofactor.

The catalysed reaction is beta-D-fructose 1,6-bisphosphate + H2O = beta-D-fructose 6-phosphate + phosphate. It carries out the reaction D-sedoheptulose 1,7-bisphosphate + H2O = D-sedoheptulose 7-phosphate + phosphate. It participates in carbohydrate biosynthesis; Calvin cycle. Its function is as follows. Catalyzes the hydrolysis of fructose 1,6-bisphosphate (Fru 1,6-P2) and sedoheptulose 1,7-bisphosphate (Sed 1,7-P2) to fructose 6-phosphate and sedoheptulose 7-phosphate, respectively. This is D-fructose 1,6-bisphosphatase class 2/sedoheptulose 1,7-bisphosphatase from Synechococcus sp. (strain CC9311).